Here is a 273-residue protein sequence, read N- to C-terminus: 2,3,4,5-tetrahydropyridine-2,6-dicarboxylate N-succinyltransferase (273 aa).

The substrate site is built by Arg-104 and Asp-141.

It belongs to the transferase hexapeptide repeat family. In terms of assembly, homotrimer.

The protein resides in the cytoplasm. The catalysed reaction is (S)-2,3,4,5-tetrahydrodipicolinate + succinyl-CoA + H2O = (S)-2-succinylamino-6-oxoheptanedioate + CoA. It participates in amino-acid biosynthesis; L-lysine biosynthesis via DAP pathway; LL-2,6-diaminopimelate from (S)-tetrahydrodipicolinate (succinylase route): step 1/3. The polypeptide is 2,3,4,5-tetrahydropyridine-2,6-dicarboxylate N-succinyltransferase (Thioalkalivibrio sulfidiphilus (strain HL-EbGR7)).